The sequence spans 301 residues: MSTGLTANNGIEEFGTIAVAMVTPFDANGALDIKAGQKLAAHLVSNGIDSLVLAGTTGESPTTSLEEKIDLLKAVKAEVGDSAKLIAGAGTNNTAASVEMARASAEAGADALLVVTPYYSKPSQEGIYQHFRTVSEATDLPICAYDIPPRSVVPIAPDTLCRLAALPMIKAVKDAKGDITAATTLIAETGLAWYSGDDPLNLPWLSVGATGFISVIGHLAPQLLREMYTNFNQGNLEKAREINAQLAPLVAAQARLGGVSLAKAGLRLQGIEVGDPRLPIVAPSESEIEDLRRDMNKTGVL.

T57 serves as a coordination point for pyruvate. Y145 acts as the Proton donor/acceptor in catalysis. K173 functions as the Schiff-base intermediate with substrate in the catalytic mechanism. Residue I213 coordinates pyruvate.

This sequence belongs to the DapA family. As to quaternary structure, homotetramer; dimer of dimers.

Its subcellular location is the cytoplasm. The enzyme catalyses L-aspartate 4-semialdehyde + pyruvate = (2S,4S)-4-hydroxy-2,3,4,5-tetrahydrodipicolinate + H2O + H(+). It functions in the pathway amino-acid biosynthesis; L-lysine biosynthesis via DAP pathway; (S)-tetrahydrodipicolinate from L-aspartate: step 3/4. Its function is as follows. Catalyzes the condensation of (S)-aspartate-beta-semialdehyde [(S)-ASA] and pyruvate to 4-hydroxy-tetrahydrodipicolinate (HTPA). This is 4-hydroxy-tetrahydrodipicolinate synthase from Corynebacterium diphtheriae (strain ATCC 700971 / NCTC 13129 / Biotype gravis).